A 206-amino-acid chain; its full sequence is Platelet glycoprotein Ib beta chain (206 aa).

A signal peptide spans 1 to 25 (MGSGPRGALSLLLLLLAPPSRPAAG). 2 disulfides stabilise this stretch: Cys26-Cys32 and Cys30-Cys39. Residues 27-55 (PAPCSCAGTLVDCGRRGLTWASLPTAFPV) enclose the LRRNT domain. Over 27 to 147 (PAPCSCAGTL…RAACAPGPLC (121 aa)) the chain is Extracellular. The LRR repeat unit spans residues 60-83 (LVLTGNNLTALPPGLLDALPALRT). A glycan (N-linked (GlcNAc...) asparagine) is linked at Asn66. The 55-residue stretch at 89–143 (NPWRCDCRLVPLRAWLAGRPERAPYRDLRCVAPPALRGRLLPYLAEDELRAACAP) folds into the LRRCT domain. Cystine bridges form between Cys93-Cys118 and Cys95-Cys141. The chain crosses the membrane as a helical span at residues 148-172 (WGALAAQLALLGLGLLHALLLVLLL). At 173–206 (CRLRRLRARARARAAARLSLTDPLVAERAGTDES) the chain is on the cytoplasmic side. Position 191 is a phosphoserine; by PKA (Ser191). The residue at position 193 (Thr193) is a Phosphothreonine.

In terms of assembly, two GP-Ib beta are disulfide-linked to one GP-Ib alpha. GP-IX is complexed with the GP-Ib heterodimer via a non covalent linkage. Interacts with TRAF4. As to expression, expressed in heart and brain.

The protein localises to the membrane. Gp-Ib, a surface membrane protein of platelets, participates in the formation of platelet plugs by binding to von Willebrand factor, which is already bound to the subendothelium. The polypeptide is Platelet glycoprotein Ib beta chain (GP1BB) (Homo sapiens (Human)).